We begin with the raw amino-acid sequence, 424 residues long: Histidine--tRNA ligase (424 aa).

Belongs to the class-II aminoacyl-tRNA synthetase family. In terms of assembly, homodimer.

Its subcellular location is the cytoplasm. The catalysed reaction is tRNA(His) + L-histidine + ATP = L-histidyl-tRNA(His) + AMP + diphosphate + H(+). In Marinomonas sp. (strain MWYL1), this protein is Histidine--tRNA ligase.